The following is a 246-amino-acid chain: Bis(5'-nucleosyl)-tetraphosphatase PrpE [asymmetrical] (246 aa).

It belongs to the PrpE family. Requires Ni(2+) as cofactor.

It carries out the reaction P(1),P(4)-bis(5'-guanosyl) tetraphosphate + H2O = GMP + GTP + 2 H(+). Functionally, asymmetrically hydrolyzes Ap4p to yield AMP and ATP. The chain is Bis(5'-nucleosyl)-tetraphosphatase PrpE [asymmetrical] from Bacillus cereus (strain ATCC 10987 / NRS 248).